Consider the following 539-residue polypeptide: 2,3-bisphosphoglycerate-independent phosphoglycerate mutase (539 aa).

Positions 37 and 86 each coordinate Mn(2+). The active site involves S86. Residues H147, 177 to 178, R210, R216, 284 to 287, and K359 contribute to the substrate site; these read RD and RADR. D426, H430, D467, H468, and H485 together coordinate Mn(2+).

Belongs to the BPG-independent phosphoglycerate mutase family. It depends on Mg(2+) as a cofactor. Requires Mn(2+) as cofactor. As to expression, expressed ubiquitously. High expression levels in the nerve ring region, intestine and body wall muscles.

The enzyme catalyses (2R)-2-phosphoglycerate = (2R)-3-phosphoglycerate. Its pathway is carbohydrate degradation; glycolysis; pyruvate from D-glyceraldehyde 3-phosphate: step 3/5. Its activity is regulated as follows. Activity is not affected by 2,3-bisphosphoglycerate. Its function is as follows. Catalyzes the interconversion of 2-phosphoglycerate and 3-phosphoglycerate. The polypeptide is 2,3-bisphosphoglycerate-independent phosphoglycerate mutase (Caenorhabditis elegans).